The sequence spans 103 residues: Small ribosomal subunit protein uS10 (103 aa).

Belongs to the universal ribosomal protein uS10 family. In terms of assembly, part of the 30S ribosomal subunit.

Functionally, involved in the binding of tRNA to the ribosomes. In Chromohalobacter salexigens (strain ATCC BAA-138 / DSM 3043 / CIP 106854 / NCIMB 13768 / 1H11), this protein is Small ribosomal subunit protein uS10.